A 95-amino-acid polypeptide reads, in one-letter code: MPKLEMMLVVLLIFPLFYFDAAGGQAVQGDRRGDGLARYLQRGDRNDESECIISTPGSSWGRCCLTRMCGTMCCPRSGCYCVYHWRRGHGCACSD.

Positions 1-24 are cleaved as a signal peptide; the sequence is MPKLEMMLVVLLIFPLFYFDAAGG. The propeptide occupies 25-45; it reads QAVQGDRRGDGLARYLQRGDR. E50 bears the 4-carboxyglutamate mark. P56 bears the 4-hydroxyproline mark. Cystine bridges form between C64–C73, C69–C81, C74–C91, and C79–C93.

Belongs to the conotoxin D superfamily. Hetero-, homo- or pseudo-homodimer (identical sequence, different post-translational modifications). Expressed by the venom duct.

The protein resides in the secreted. Alpha-conotoxins act on postsynaptic membranes, they bind to the nicotinic acetylcholine receptors (nAChR) and thus inhibit them. Through its two C-terminal domains, this homodimeric protein would bind to two nAChR allosteric sites, located outside the nAChR C-loop of the principal binding face and at the adjacent binding interface in a clockwise direction. This toxin specifically blocks mammalian neuronal nAChR of the alpha-7/CHRNA7, alpha-3-beta-2/CHRNA3-CHRNB2 and alpha-4-beta-2/CHRNA4-CHRNB2 subtypes. In Conus capitaneus (Captain cone), this protein is Alpha-conotoxin-like Cp20.4.